The sequence spans 138 residues: MSGTLLAFDFGTKSIGVAVGQRITGTARPLPAIKAQDGTPDWNLIERLLKEWQPDEIIVGLPLNMDGTEQPLTARARKFANRIHGRFGIEVKLHDERLSTVEARSGLFEQGGYRALNKGKVDSASAVIILESYFEQGY.

This sequence belongs to the YqgF nuclease family.

It is found in the cytoplasm. Could be a nuclease involved in processing of the 5'-end of pre-16S rRNA. The polypeptide is Putative pre-16S rRNA nuclease (Escherichia coli O7:K1 (strain IAI39 / ExPEC)).